A 177-amino-acid polypeptide reads, in one-letter code: FAPLTSRGSQQYRALTVSELTQQMFDAKNMMAACDPRHGRYLTVAAIFRGRMSMKEVDEQMLNVQNKNSSYFVEWIPNNVKTAVCDIPPRGLKMSATFIGNSTAIQELFKRISEQFTAMFRRKAFLHWYTGEGMDEMEFTEAESNMNDLVSEYQQYQDATAEEEGEFDEEEGDEEAA.

The tract at residues 156 to 177 (YQDATAEEEGEFDEEEGDEEAA) is disordered. A compositionally biased stretch (acidic residues) spans 160-177 (TAEEEGEFDEEEGDEEAA).

It belongs to the tubulin family. In terms of assembly, dimer of alpha and beta chains. A typical microtubule is a hollow water-filled tube with an outer diameter of 25 nm and an inner diameter of 15 nM. Alpha-beta heterodimers associate head-to-tail to form protofilaments running lengthwise along the microtubule wall with the beta-tubulin subunit facing the microtubule plus end conferring a structural polarity. Microtubules usually have 13 protofilaments but different protofilament numbers can be found in some organisms and specialized cells. Mg(2+) serves as cofactor.

It localises to the cytoplasm. The protein resides in the cytoskeleton. In terms of biological role, tubulin is the major constituent of microtubules, a cylinder consisting of laterally associated linear protofilaments composed of alpha- and beta-tubulin heterodimers. Microtubules grow by the addition of GTP-tubulin dimers to the microtubule end, where a stabilizing cap forms. Below the cap, tubulin dimers are in GDP-bound state, owing to GTPase activity of alpha-tubulin. The chain is Tubulin beta chain from Lytechinus pictus (Painted sea urchin).